Consider the following 404-residue polypeptide: Probable tRNA sulfurtransferase (404 aa).

Residues His-60 to Asn-165 form the THUMP domain. ATP contacts are provided by residues Met-183–Leu-184, His-208–Phe-209, Arg-265, Gly-287, and Gln-296.

The protein belongs to the ThiI family.

It localises to the cytoplasm. It carries out the reaction [ThiI sulfur-carrier protein]-S-sulfanyl-L-cysteine + a uridine in tRNA + 2 reduced [2Fe-2S]-[ferredoxin] + ATP + H(+) = [ThiI sulfur-carrier protein]-L-cysteine + a 4-thiouridine in tRNA + 2 oxidized [2Fe-2S]-[ferredoxin] + AMP + diphosphate. The enzyme catalyses [ThiS sulfur-carrier protein]-C-terminal Gly-Gly-AMP + S-sulfanyl-L-cysteinyl-[cysteine desulfurase] + AH2 = [ThiS sulfur-carrier protein]-C-terminal-Gly-aminoethanethioate + L-cysteinyl-[cysteine desulfurase] + A + AMP + 2 H(+). Its pathway is cofactor biosynthesis; thiamine diphosphate biosynthesis. Functionally, catalyzes the ATP-dependent transfer of a sulfur to tRNA to produce 4-thiouridine in position 8 of tRNAs, which functions as a near-UV photosensor. Also catalyzes the transfer of sulfur to the sulfur carrier protein ThiS, forming ThiS-thiocarboxylate. This is a step in the synthesis of thiazole, in the thiamine biosynthesis pathway. The sulfur is donated as persulfide by IscS. This chain is Probable tRNA sulfurtransferase, found in Streptococcus agalactiae serotype III (strain NEM316).